Here is a 278-residue protein sequence, read N- to C-terminus: Digeranylgeranylglyceryl phosphate synthase (278 aa).

8 helical membrane-spanning segments follow: residues Val-15 to Val-35, Pro-36 to Ile-56, Ile-89 to Ile-109, Leu-133 to Gly-153, Thr-159 to Ile-179, Trp-203 to Phe-223, Phe-225 to Leu-245, and Ala-258 to Ile-278.

It belongs to the UbiA prenyltransferase family. DGGGP synthase subfamily. Mg(2+) serves as cofactor.

Its subcellular location is the cell membrane. The enzyme catalyses sn-3-O-(geranylgeranyl)glycerol 1-phosphate + (2E,6E,10E)-geranylgeranyl diphosphate = 2,3-bis-O-(geranylgeranyl)-sn-glycerol 1-phosphate + diphosphate. The protein operates within membrane lipid metabolism; glycerophospholipid metabolism. In terms of biological role, prenyltransferase that catalyzes the transfer of the geranylgeranyl moiety of geranylgeranyl diphosphate (GGPP) to the C2 hydroxyl of (S)-3-O-geranylgeranylglyceryl phosphate (GGGP). This reaction is the second ether-bond-formation step in the biosynthesis of archaeal membrane lipids. The sequence is that of Digeranylgeranylglyceryl phosphate synthase from Sulfurisphaera tokodaii (strain DSM 16993 / JCM 10545 / NBRC 100140 / 7) (Sulfolobus tokodaii).